A 307-amino-acid polypeptide reads, in one-letter code: Serine/threonine-protein phosphatase 4 catalytic subunit (307 aa).

Ala-2 is modified (N-acetylalanine). Residues Asp-54, His-56, Asp-82, and Asn-114 each contribute to the Mn(2+) site. His-115 acts as the Proton donor in catalysis. His-164 and His-238 together coordinate Mn(2+). A Leucine methyl ester modification is found at Leu-307.

This sequence belongs to the PPP phosphatase family. PP-4 (PP-X) subfamily. Serine/threonine-protein phosphatase 4 (PP4) occurs in different assemblies of the catalytic and one or more regulatory subunits. Component of the PP4 complexes PPP4C-PPP4R1, PPP4C-PPP4R2, PPP4C-PPP4R2-PPP4R3A, PPP4C-PPP4R2-PPP4R3B and PPP4C-PPP4R4. The PPP4C-PPP4R2 complex appears to be a tetramer composed of 2 molecules of PPP4C and 2 molecules of PPP4R2. Interacts with REL, NFKB1/p50 and RELA. Interacts with SMN1 and GEMIN4. Interacts with IRS4 (phosphorylated). Interacts with SMEK1/PPP4R3A; the interaction requires PP4R2. Interacts with HDAC3. It depends on Mn(2+) as a cofactor. Methylation at the C-terminal Leu-307 is critical for interactions with regulatory subunits and functions in DNA repair.

The protein resides in the cytoplasm. Its subcellular location is the nucleus. It localises to the cytoskeleton. It is found in the microtubule organizing center. The protein localises to the centrosome. It catalyses the reaction O-phospho-L-seryl-[protein] + H2O = L-seryl-[protein] + phosphate. The enzyme catalyses O-phospho-L-threonyl-[protein] + H2O = L-threonyl-[protein] + phosphate. Protein phosphatase that is involved in many processes such as microtubule organization at centrosomes, maturation of spliceosomal snRNPs, apoptosis, DNA repair, tumor necrosis factor (TNF)-alpha signaling, activation of c-Jun N-terminal kinase MAPK8, regulation of histone acetylation, DNA damage checkpoint signaling, NF-kappa-B activation and cell migration. The PPP4C-PPP4R1 PP4 complex may play a role in dephosphorylation and regulation of HDAC3. The PPP4C-PPP4R2-PPP4R3A PP4 complex specifically dephosphorylates H2AX phosphorylated on Ser-140 (gamma-H2AX) generated during DNA replication and required for DNA DSB repair. Dephosphorylates NDEL1 at CDK1 phosphorylation sites and negatively regulates CDK1 activity in interphase. In response to DNA damage, catalyzes RPA2 dephosphorylation, an essential step for DNA repair since it allows the efficient RPA2-mediated recruitment of RAD51 to chromatin. The chain is Serine/threonine-protein phosphatase 4 catalytic subunit (Ppp4c) from Rattus norvegicus (Rat).